Reading from the N-terminus, the 283-residue chain is Cuticle collagen 49 (283 aa).

The N-terminal stretch at Met1–Cys19 is a signal peptide. The disordered stretch occupies residues Glu90–Ala283. Positions Val127–Ile139 are enriched in basic and acidic residues. Positions Ala143 to Leu155 are enriched in pro residues. The segment covering Gln185–Gly204 has biased composition (low complexity). The Collagen-like domain occupies Gly213–Glu271. Basic and acidic residues predominate over residues Arg244–Asp257.

The protein belongs to the cuticular collagen family. In terms of assembly, collagen polypeptide chains are complexed within the cuticle by disulfide bonds and other types of covalent cross-links.

Probable cuticular collagen-like protein. Nematode cuticles are composed largely of collagen-like proteins. The cuticle functions both as an exoskeleton and as a barrier to protect the worm from its environment. Acts downstream of the Wnt signaling pathway, perhaps in the formation of the adult cuticle. In Caenorhabditis elegans, this protein is Cuticle collagen 49.